The chain runs to 519 residues: uncharacterized protein (519 aa).

Helical transmembrane passes span 52 to 72 (IYFLILLYLIQGVPMGLVRGS), 86 to 106 (LATYSLAAYPYSLKVLWSPIV), 119 to 139 (TWVVPCMLLISSTLLLFSYNV), 156 to 176 (WSFLLVFVCATQDIAVDGWSL), 199 to 219 (FFLSFTILLVFTSPEFANTFI), 231 to 251 (LSGYIKFWAYFTFIASVLVCF), 313 to 333 (MLSLIILINFPLGLALGVYTG), 343 to 363 (IWLKGYWGRVVSILLNTILVY), 374 to 394 (VFFPIFLCYTLNASFSTIQFV), 408 to 430 (IGGTYMTILNTLSNLGGSWPQYV), and 477 to 497 (TSIVGIFLAISICVSLITPVV).

It is found in the membrane. This is an uncharacterized protein from Schizosaccharomyces pombe (strain 972 / ATCC 24843) (Fission yeast).